The chain runs to 301 residues: Phosphatidylglycerol--prolipoprotein diacylglyceryl transferase (301 aa).

3 helical membrane-spanning segments follow: residues 17–37, 59–79, and 97–117; these read LAVR…IVVG, MLFY…VLFY, and GGMS…LFAY. Arg142 provides a ligand contact to a 1,2-diacyl-sn-glycero-3-phospho-(1'-sn-glycerol). 2 helical membrane-spanning segments follow: residues 230–250 and 265–285; these read MGAI…TVEF and LSMG…LLVW.

This sequence belongs to the Lgt family.

The protein resides in the cell inner membrane. It catalyses the reaction L-cysteinyl-[prolipoprotein] + a 1,2-diacyl-sn-glycero-3-phospho-(1'-sn-glycerol) = an S-1,2-diacyl-sn-glyceryl-L-cysteinyl-[prolipoprotein] + sn-glycerol 1-phosphate + H(+). It participates in protein modification; lipoprotein biosynthesis (diacylglyceryl transfer). Catalyzes the transfer of the diacylglyceryl group from phosphatidylglycerol to the sulfhydryl group of the N-terminal cysteine of a prolipoprotein, the first step in the formation of mature lipoproteins. The sequence is that of Phosphatidylglycerol--prolipoprotein diacylglyceryl transferase from Paraburkholderia xenovorans (strain LB400).